The sequence spans 70 residues: Gas vesicle protein A (70 aa).

The protein belongs to the gas vesicle GvpA family. As to quaternary structure, the gas vesicle shell is 2 nm thick and consists of a single layer of this protein. It forms helical ribs nearly perpendicular to the long axis of the vesicle.

It is found in the gas vesicle shell. Functionally, gas vesicles are hollow, gas filled proteinaceous nanostructures found in some microorganisms. During planktonic growth they allow positioning of the organism at a favorable depth for light or nutrient acquisition. GvpA forms the protein shell. This Cereibacter sphaeroides (strain ATCC 17023 / DSM 158 / JCM 6121 / CCUG 31486 / LMG 2827 / NBRC 12203 / NCIMB 8253 / ATH 2.4.1.) (Rhodobacter sphaeroides) protein is Gas vesicle protein A.